Consider the following 500-residue polypeptide: Aspartyl/glutamyl-tRNA(Asn/Gln) amidotransferase subunit B (500 aa).

The protein belongs to the GatB/GatE family. GatB subfamily. Heterotrimer of A, B and C subunits.

The enzyme catalyses L-glutamyl-tRNA(Gln) + L-glutamine + ATP + H2O = L-glutaminyl-tRNA(Gln) + L-glutamate + ADP + phosphate + H(+). The catalysed reaction is L-aspartyl-tRNA(Asn) + L-glutamine + ATP + H2O = L-asparaginyl-tRNA(Asn) + L-glutamate + ADP + phosphate + 2 H(+). In terms of biological role, allows the formation of correctly charged Asn-tRNA(Asn) or Gln-tRNA(Gln) through the transamidation of misacylated Asp-tRNA(Asn) or Glu-tRNA(Gln) in organisms which lack either or both of asparaginyl-tRNA or glutaminyl-tRNA synthetases. The reaction takes place in the presence of glutamine and ATP through an activated phospho-Asp-tRNA(Asn) or phospho-Glu-tRNA(Gln). This Rhizobium meliloti (strain 1021) (Ensifer meliloti) protein is Aspartyl/glutamyl-tRNA(Asn/Gln) amidotransferase subunit B.